We begin with the raw amino-acid sequence, 264 residues long: Synaptophysin-like protein 2 (264 aa).

Over 1 to 33 (MSSTESPGRTSDKSPRQQVDRLLLGLRWQRLEE) the chain is Cytoplasmic. Residues 30–238 (RLEEPLGFIK…NCWFVFKETP (209 aa)) enclose the MARVEL domain. The chain crosses the membrane as a helical span at residues 34–54 (PLGFIKVLQWLFAIFAFGSCG). Over 55–116 (SYSGETGALV…LMGDFSAPAE (62 aa)) the chain is Vesicular. Residues 117–137 (FFVTLGIFSFFYTMAALVIYL) traverse the membrane as a helical segment. Residues 138–150 (RFHKLYTENKRFP) lie on the Cytoplasmic side of the membrane. Residues 151-171 (LVDFCVTVSFTFFWLVAAAAW) form a helical membrane-spanning segment. At 172–213 (GKGLTDVKGATRPSSLTAAMSVCHGEEAVCSAGATPSMGLAN) the chain is on the vesicular side. The N-linked (GlcNAc...) asparagine glycan is linked to Asn-213. Residues 214 to 234 (LSVLFGFINFFLWAGNCWFVF) form a helical membrane-spanning segment. Residues 235-264 (KETPWHGQGQDQGQGPSQESAAEQGAVEKQ) are Cytoplasmic-facing. A disordered region spans residues 242-264 (QGQDQGQGPSQESAAEQGAVEKQ).

This sequence belongs to the synaptophysin/synaptobrevin family. In terms of tissue distribution, expressed abundantly in skeletal muscle and at lower levels in the kidney.

It is found in the membrane. Functionally, involved in communication between the T-tubular and junctional sarcoplasmic reticulum (SR) membranes. The chain is Synaptophysin-like protein 2 (Sypl2) from Mus musculus (Mouse).